A 195-amino-acid polypeptide reads, in one-letter code: Sec-independent protein translocase protein TatB (195 aa).

Residues Phe2–Gly22 form a helical membrane-spanning segment. A compositionally biased stretch (basic and acidic residues) spans Val103 to Lys125. Positions Val103–Thr195 are disordered. 2 stretches are compositionally biased toward polar residues: residues Ser127–Ala139 and Val146–Ser155.

This sequence belongs to the TatB family. The Tat system comprises two distinct complexes: a TatABC complex, containing multiple copies of TatA, TatB and TatC subunits, and a separate TatA complex, containing only TatA subunits. Substrates initially bind to the TatABC complex, which probably triggers association of the separate TatA complex to form the active translocon.

It localises to the cell membrane. Functionally, part of the twin-arginine translocation (Tat) system that transports large folded proteins containing a characteristic twin-arginine motif in their signal peptide across membranes. Together with TatC, TatB is part of a receptor directly interacting with Tat signal peptides. TatB may form an oligomeric binding site that transiently accommodates folded Tat precursor proteins before their translocation. This Corynebacterium jeikeium (strain K411) protein is Sec-independent protein translocase protein TatB.